The sequence spans 236 residues: Phosphoribosylaminoimidazole-succinocarboxamide synthase (236 aa).

The protein belongs to the SAICAR synthetase family.

The enzyme catalyses 5-amino-1-(5-phospho-D-ribosyl)imidazole-4-carboxylate + L-aspartate + ATP = (2S)-2-[5-amino-1-(5-phospho-beta-D-ribosyl)imidazole-4-carboxamido]succinate + ADP + phosphate + 2 H(+). Its pathway is purine metabolism; IMP biosynthesis via de novo pathway; 5-amino-1-(5-phospho-D-ribosyl)imidazole-4-carboxamide from 5-amino-1-(5-phospho-D-ribosyl)imidazole-4-carboxylate: step 1/2. In Chlorobium phaeobacteroides (strain DSM 266 / SMG 266 / 2430), this protein is Phosphoribosylaminoimidazole-succinocarboxamide synthase.